A 449-amino-acid chain; its full sequence is Glutamate--tRNA ligase 2 (449 aa).

Positions 11 to 21 (PSPTGFLHIGN) match the 'HIGH' region motif. Residues 242 to 246 (GLSKR) carry the 'KMSKS' region motif. Residue K245 participates in ATP binding.

The protein belongs to the class-I aminoacyl-tRNA synthetase family. Glutamate--tRNA ligase type 1 subfamily. As to quaternary structure, monomer.

It localises to the cytoplasm. It catalyses the reaction tRNA(Glu) + L-glutamate + ATP = L-glutamyl-tRNA(Glu) + AMP + diphosphate. Its function is as follows. Catalyzes the attachment of glutamate to tRNA(Glu) in a two-step reaction: glutamate is first activated by ATP to form Glu-AMP and then transferred to the acceptor end of tRNA(Glu). The sequence is that of Glutamate--tRNA ligase 2 from Methylorubrum populi (strain ATCC BAA-705 / NCIMB 13946 / BJ001) (Methylobacterium populi).